We begin with the raw amino-acid sequence, 413 residues long: Peptidase T (413 aa).

Residue histidine 82 participates in Zn(2+) binding. Aspartate 84 is a catalytic residue. Aspartate 144 contacts Zn(2+). Glutamate 178 functions as the Proton acceptor in the catalytic mechanism. Zn(2+)-binding residues include glutamate 179, aspartate 201, and histidine 383.

The protein belongs to the peptidase M20B family. As to quaternary structure, homotrimer. Requires Zn(2+) as cofactor.

The protein resides in the cytoplasm. It catalyses the reaction Release of the N-terminal residue from a tripeptide.. Its activity is regulated as follows. Totally inhibited by EDTA, EGTA, and 1,10-phenanthroline. Strongly inhibited by divalent cations such as Cu(2+), Cd(2+), Co(2+) and Mn(2+). Partially inhibited by the reducing agents 2-mercaptoethanol and dithiothreitol. Functionally, cleaves the N-terminal amino acid of tripeptides. Shows broad substrate specificity, exhibiting maximum activity against hydrophobic tripeptides, with the highest activity for Met-Gly-Gly. Therefore this enzyme may play an important role in flavor formation during cheese ripening. Is also able to slowly hydrolyze some hydrophobic dipeptides, but displays no activity against tetrapeptides and the tripeptide Phe-Gly-Gly. This Lactobacillus helveticus (Lactobacillus suntoryeus) protein is Peptidase T (pepT).